A 379-amino-acid chain; its full sequence is Putative 8-amino-7-oxononanoate synthase (379 aa).

R21 is a substrate binding site. 97–98 (GY) contacts pyridoxal 5'-phosphate. H122 lines the substrate pocket. Residues S169, 194–197 (DDAH), and 223–226 (TLSK) contribute to the pyridoxal 5'-phosphate site. An N6-(pyridoxal phosphate)lysine modification is found at K226. Residue T340 participates in substrate binding.

This sequence belongs to the class-II pyridoxal-phosphate-dependent aminotransferase family. BioF subfamily. As to quaternary structure, homodimer. Pyridoxal 5'-phosphate is required as a cofactor.

The catalysed reaction is 6-carboxyhexanoyl-[ACP] + L-alanine + H(+) = (8S)-8-amino-7-oxononanoate + holo-[ACP] + CO2. It participates in cofactor biosynthesis; biotin biosynthesis. Its function is as follows. Catalyzes the decarboxylative condensation of pimeloyl-[acyl-carrier protein] and L-alanine to produce 8-amino-7-oxononanoate (AON), [acyl-carrier protein], and carbon dioxide. The sequence is that of Putative 8-amino-7-oxononanoate synthase (bioF) from Bacillus licheniformis (strain ATCC 14580 / DSM 13 / JCM 2505 / CCUG 7422 / NBRC 12200 / NCIMB 9375 / NCTC 10341 / NRRL NRS-1264 / Gibson 46).